A 1787-amino-acid polypeptide reads, in one-letter code: MSDDQHESIDGDETMEEDSMLAEGHEDGEEDVGEDEEEVETEESQGVPTTSEKKKPPPKKKKGGKKSSKKKNNCDYPDPYKSTSAEISAAIGLTDVDVDYEQEEFQSITNLKNFSSLVKPYILKVNPGTNVTKMYPLFQVKYKEFQDHMTAHGKSIQKQQRAKFVPVPVPVTPQEKIIPQKTRSSARRKRRDGSDGEGGGHDSDQEFEALIKQHEKQQDEAEKGKEEARINRAAAKVDKRKAALESARASKRARKEQGVVEENHQENCEVCNQDGELMLCDTCTRAYHVACIDENMEQPPEGDWSCPHCEEHGPDVLIVEEEPAKANMDYCRICKETSNILLCDTCPSSYHAYCIDPPLTEIPEGEWSCPRCIIPEPAQRIEKILSWRWKEISYPEPLECKEGEEASKDDVFLKPPRKMEPRREREFFVKWKYLAYWQCEWLSETLMDVYFTALVRMYWRKVDSENPPIFEESTLSRHHSDHDPYKLRERFYQYGVKPEWMQIHRIINHLSYAKSQQDYLVKWKELSYEHATWERDDTDIANYEDAIIKYWHHRERMLNDEVPRNVQKMIAKQREAKGLGPKEDEVTSRRKKREKIDILKKYEVQPDFISETGGNLHPYQLEGINWLRHCWSNGTDAILADEMGLGKTVQSLTFLYTLMKEGHTKGPFLIAAPLSTIINWEREAELWCPDFYVVTYVGDRESRMVIREHEFSFVDGAVRGGPKVSKIKTLENLKFHVLLTSYECINMDKAILSSIDWAALVVDEAHRLKNNQSTFFKNLREYNIQYRVLLTGTPLQNNLEELFHLLNFLAPDRFNQLESFTAEFSEISKEDQIEKLHNLLGPHMLRRLKADVLTGMPSKQELIVRVELSAMQKKYYKNILTRNFDALNVKNGGTQMSLINIIMELKKCCNHPYLFMKACLEAPKLKNGMYEGSALIKNAGKFVLLQKMLRKLKDGGHRVLIFSQMTMMLDILEDFCDVEGYKYERIDGSITGQQRQDAIDRYNAPGAKQFVFLLSTRAGGLGINLATADTVIIYDSDWNPHNDIQAFSRAHRLGQKHKVMIYRFVTKGSVEERITSVAKKKMLLTHLVVRAGLGAKDGKSMSKTELDDVLRWGTEELFKEEEAPVEGADGEGTSSKKPNEQEIVWDDAAVDFLLDRNKEEEGQDGEKKEHWTNEYLSSFKVATYNTKEADDADDDEDETEVIKEGTEEQDPNYWEKLLKHHYEQDQETELQKLGKGKRVRRQVNYASENMGQDWSAQNNQQQEEDDGSEYGSDNGELLQTDEDYEERRRRREERSEKLPPLLAKVNGQIEVLGFNPRQRKAFYNAVMRWGMPPQDLTQSSWQVRDLRNKSEKVFKAYSSLFMRHLCEPVVDNSDSFMDGVPREGLNRQAVLSRIGLMSILRKKVQEFEKFNGEWSMPETREKMLATAAQASVSNLPGMIKIKEEPIDIDETPMDVDQSNITKTEELASEVKVEEEPKAPRLPYKFNICDGGYTELHSLWINEEKVARNGKEYEIWHRRHDFWLLAAVAVYGYGRYQINFQDIMNDPKFSIVNEPFKQTGADPATNFADVKNKFLARRFKLLEQSLVIEEQLRRAAHINKQQSPDQVGQLAQHFSELEHTADAHVNIARESNNGNRNANAILHKCLAQLDDLLSDLKTDVARLPATISQVRPVTERLQMSERQILSRLVVAKDPDAAPSKPALPPSGPFITPLFNQNFTTIQPKFPSLFDCNLSPDDEPIDIEGSISAAVAEASRASSIAATKDEPMDTSDKDIPSTSAAAGSSYPRY.

2 disordered regions span residues 1–80 (MSDD…PDPY) and 170–258 (PVTP…KEQG). Acidic residues predominate over residues 10–43 (DGDETMEEDSMLAEGHEDGEEDVGEDEEEVETEE). Basic residues predominate over residues 56–71 (PPPKKKKGGKKSSKKK). Residues 192-243 (DGSDGEGGGHDSDQEFEALIKQHEKQQDEAEKGKEEARINRAAAKVDKRKAA) show a composition bias toward basic and acidic residues. 2 consecutive PHD-type zinc fingers follow at residues 265–312 (QENC…CEEH) and 328–375 (MDYC…CIIP). Chromo domains are found at residues 373-476 (IIPE…STLS) and 501-583 (MQIH…GPKE). The 185-residue stretch at 628-812 (RHCWSNGTDA…FHLLNFLAPD (185 aa)) folds into the Helicase ATP-binding domain. 641–648 (DEMGLGKT) lines the ATP pocket. The DEAH box motif lies at 763 to 766 (DEAH). The region spanning 944–1107 (LLQKMLRKLK…GKSMSKTELD (164 aa)) is the Helicase C-terminal domain. Disordered stretches follow at residues 1120–1141 (EEEA…PNEQ), 1186–1212 (TKEA…QDPN), 1248–1295 (ENMG…EERS), and 1754–1787 (RASS…YPRY). Over residues 1190-1199 (DDADDDEDET) the composition is skewed to acidic residues. Over residues 1248-1261 (ENMGQDWSAQNNQQ) the composition is skewed to polar residues. Positions 1761-1773 (TKDEPMDTSDKDI) are enriched in basic and acidic residues.

This sequence belongs to the SNF2/RAD54 helicase family. As to expression, expressed in the head and vulva.

Its subcellular location is the nucleus. It catalyses the reaction ATP + H2O = ADP + phosphate + H(+). Functionally, ATP-dependent chromatin-remodeling factor that has a role in notch signaling-dependent vulval cell fate determination. May also have a role in pharyngeal precursor cell specification. This is Chromodomain-helicase-DNA-binding protein 3 homolog (chd-3) from Caenorhabditis elegans.